The following is a 426-amino-acid chain: Protein EARLY STARVATION 1, chloroplastic (426 aa).

The N-terminal 58 residues, Met-1–Arg-58, are a transit peptide targeting the chloroplast. 2 disordered regions span residues Cys-106 to Ala-127 and Gln-396 to Gln-426. The segment covering Thr-118 to Ala-127 has biased composition (basic and acidic residues). Residues Pro-412–Gln-426 are compositionally biased toward pro residues.

It belongs to the ESV1 family.

The protein localises to the plastid. It is found in the chloroplast stroma. Its subcellular location is the plastid stroma. Functionally, binds preferentially to highly ordered alpha-glucans, such as starch and crystalline maltodextrins. Involved in the organization of the starch granule matrix, thus influencing starch turnover by modulating the accessibility of starch polymers to modifying and degrading enzymes involved in phosphorylation, hydrolyzes and synthesis, including starch synthases (SSI and SSIII), starch phosphorylases (PHS1), isoamylase, beta-amylase, glucan water dikinase (GWD) and phosphoglucan water dikinase (PWD). Prevents GWD- and PWD-mediated starch phosphorylation, and subsequent degradation. Required for the control of starch degradation in leaves and starch distribution in nonphotosynthetic parts (e.g. cells immediately adjacent to veins, columella cells of root caps, stems, flowers and siliques) by limiting the hasty depletion of starch reserves during the night. Promotes gravitropic responses, negative in shoots but positive in roots, by maintaining starch granules (statoliths) accumulation in hypocotyls and roots columella, especially in dark conditions and in the endodermis, where starch is formed from transported glucose-6-phosphates. The protein is Protein EARLY STARVATION 1, chloroplastic of Arabidopsis thaliana (Mouse-ear cress).